A 173-amino-acid polypeptide reads, in one-letter code: Mediator of RNA polymerase II transcription subunit 19 (173 aa).

Residues 139–173 are disordered; it reads LMRGDDMSENDEFGARRSKRKKKAQNGTDSKRQHI.

The protein belongs to the Mediator complex subunit 19 family. As to quaternary structure, component of the Mediator complex.

Its subcellular location is the nucleus. Component of the Mediator complex, a coactivator involved in the regulated transcription of nearly all RNA polymerase II-dependent genes. Mediator functions as a bridge to convey information from gene-specific regulatory proteins to the basal RNA polymerase II transcription machinery. Mediator is recruited to promoters by direct interactions with regulatory proteins and serves as a scaffold for the assembly of a functional preinitiation complex with RNA polymerase II and the general transcription factors. This chain is Mediator of RNA polymerase II transcription subunit 19 (ROX3), found in Scheffersomyces stipitis (strain ATCC 58785 / CBS 6054 / NBRC 10063 / NRRL Y-11545) (Yeast).